Reading from the N-terminus, the 170-residue chain is Translationally-controlled tumor protein homolog (170 aa).

The 170-residue stretch at M1–V170 folds into the TCTP domain.

This sequence belongs to the TCTP family.

It is found in the cytoplasm. It localises to the cytoskeleton. Its function is as follows. Involved in protein synthesis. Involved in microtubule stabilization. The chain is Translationally-controlled tumor protein homolog from Gibberella zeae (strain ATCC MYA-4620 / CBS 123657 / FGSC 9075 / NRRL 31084 / PH-1) (Wheat head blight fungus).